A 296-amino-acid chain; its full sequence is 4-hydroxy-tetrahydrodipicolinate synthase (296 aa).

Threonine 47 is a pyruvate binding site. Catalysis depends on tyrosine 135, which acts as the Proton donor/acceptor. The active-site Schiff-base intermediate with substrate is lysine 163. A pyruvate-binding site is contributed by isoleucine 205.

This sequence belongs to the DapA family. In terms of assembly, homotetramer; dimer of dimers.

Its subcellular location is the cytoplasm. The catalysed reaction is L-aspartate 4-semialdehyde + pyruvate = (2S,4S)-4-hydroxy-2,3,4,5-tetrahydrodipicolinate + H2O + H(+). Its pathway is amino-acid biosynthesis; L-lysine biosynthesis via DAP pathway; (S)-tetrahydrodipicolinate from L-aspartate: step 3/4. Its function is as follows. Catalyzes the condensation of (S)-aspartate-beta-semialdehyde [(S)-ASA] and pyruvate to 4-hydroxy-tetrahydrodipicolinate (HTPA). The sequence is that of 4-hydroxy-tetrahydrodipicolinate synthase from Macrococcus caseolyticus (strain JCSC5402) (Macrococcoides caseolyticum).